The primary structure comprises 134 residues: MRSVLTISVGLLFGLALSSVAHANDHKILGVIAMPRNETNDLTLKIPVCRIVKRIQLTADHGDIELSGASVYFKTARSASQSLNVPSSIKEGQTTGWININSDNDNKRCVSKITFSGHTVNSSDMARLKVIGDD.

A signal peptide spans 1–23 (MRSVLTISVGLLFGLALSSVAHA).

Belongs to the UPF0412 family.

This is UPF0412 protein YaaI from Salmonella typhimurium (strain LT2 / SGSC1412 / ATCC 700720).